Reading from the N-terminus, the 83-residue chain is Cell division topological specificity factor (83 aa).

The protein belongs to the MinE family.

Its function is as follows. Prevents the cell division inhibition by proteins MinC and MinD at internal division sites while permitting inhibition at polar sites. This ensures cell division at the proper site by restricting the formation of a division septum at the midpoint of the long axis of the cell. The chain is Cell division topological specificity factor from Pseudoalteromonas atlantica (strain T6c / ATCC BAA-1087).